A 321-amino-acid chain; its full sequence is Aspartate carbamoyltransferase catalytic subunit (321 aa).

Positions 60 and 61 each coordinate carbamoyl phosphate. L-aspartate is bound at residue Lys-88. Positions 110, 138, and 141 each coordinate carbamoyl phosphate. L-aspartate contacts are provided by Arg-171 and Arg-225. Carbamoyl phosphate contacts are provided by Gly-266 and Pro-267.

Belongs to the aspartate/ornithine carbamoyltransferase superfamily. ATCase family. Heterododecamer (2C3:3R2) of six catalytic PyrB chains organized as two trimers (C3), and six regulatory PyrI chains organized as three dimers (R2).

The catalysed reaction is carbamoyl phosphate + L-aspartate = N-carbamoyl-L-aspartate + phosphate + H(+). It functions in the pathway pyrimidine metabolism; UMP biosynthesis via de novo pathway; (S)-dihydroorotate from bicarbonate: step 2/3. Its function is as follows. Catalyzes the condensation of carbamoyl phosphate and aspartate to form carbamoyl aspartate and inorganic phosphate, the committed step in the de novo pyrimidine nucleotide biosynthesis pathway. In Sorangium cellulosum (strain So ce56) (Polyangium cellulosum (strain So ce56)), this protein is Aspartate carbamoyltransferase catalytic subunit.